Consider the following 357-residue polypeptide: Cell division control protein 10 (357 aa).

The Septin-type G domain maps to 34–306; it reads RGFQFNIMVV…ETFRSKQLIA (273 aa). Residues 44 to 51 form a G1 motif region; that stretch reads GRSGLGKS. Residues 44 to 51, Thr78, Gly104, 184 to 192, Gly240, and Arg255 each bind GTP; these read GRSGLGKS and KSDSLTLDE. A G3 motif region spans residues 101-104; sequence DTPG. The G4 motif stretch occupies residues 183–186; the sequence is AKSD. The segment at 310–357 is disordered; sequence NASNPNRQSQLQKDQGQTSQQSNQDLKNTSGVPNAPMFQSTTGTAAAR.

It belongs to the TRAFAC class TrmE-Era-EngA-EngB-Septin-like GTPase superfamily. Septin GTPase family.

Its subcellular location is the bud neck. Plays a role in the cell cycle. Involved in the formation of the ring of filaments in the neck region at the mother-bud junction during mitosis. This is Cell division control protein 10 (CDC10) from Candida albicans (strain SC5314 / ATCC MYA-2876) (Yeast).